The chain runs to 370 residues: tRNA pseudouridine synthase D (370 aa).

The Nucleophile role is filled by aspartate 77. The TRUD domain maps to 152-297 (GVPNYFGEQR…LEQERRPLLL (146 aa)).

This sequence belongs to the pseudouridine synthase TruD family.

It carries out the reaction uridine(13) in tRNA = pseudouridine(13) in tRNA. In terms of biological role, responsible for synthesis of pseudouridine from uracil-13 in transfer RNAs. The polypeptide is tRNA pseudouridine synthase D (Shewanella oneidensis (strain ATCC 700550 / JCM 31522 / CIP 106686 / LMG 19005 / NCIMB 14063 / MR-1)).